We begin with the raw amino-acid sequence, 67 residues long: Probable Sec-independent protein translocase protein TatE (67 aa).

Residues 4–21 (ISITKLLVIAALVVLLFG) form a helical membrane-spanning segment.

The protein belongs to the TatA/E family. TatE subfamily.

Its subcellular location is the cell inner membrane. Part of the twin-arginine translocation (Tat) system that transports large folded proteins containing a characteristic twin-arginine motif in their signal peptide across membranes. TatE shares overlapping functions with TatA. This Citrobacter rodentium (strain ICC168) (Citrobacter freundii biotype 4280) protein is Probable Sec-independent protein translocase protein TatE.